A 184-amino-acid polypeptide reads, in one-letter code: Peptide deformylase (184 aa).

The Fe cation site is built by Cys111 and His154. Glu155 is a catalytic residue. His158 provides a ligand contact to Fe cation.

Belongs to the polypeptide deformylase family. It depends on Fe(2+) as a cofactor.

It carries out the reaction N-terminal N-formyl-L-methionyl-[peptide] + H2O = N-terminal L-methionyl-[peptide] + formate. Removes the formyl group from the N-terminal Met of newly synthesized proteins. Requires at least a dipeptide for an efficient rate of reaction. N-terminal L-methionine is a prerequisite for activity but the enzyme has broad specificity at other positions. This chain is Peptide deformylase, found in Pediococcus pentosaceus (strain ATCC 25745 / CCUG 21536 / LMG 10740 / 183-1w).